The sequence spans 463 residues: ATP-dependent protease ATPase subunit HslU (463 aa).

Residues Ile19 and 61-66 (GVGKTE) contribute to the ATP site. Positions 154–174 (FGGAQNSSQTSDTQEDGEIEK) are disordered. Positions 277, 341, and 413 each coordinate ATP.

It belongs to the ClpX chaperone family. HslU subfamily. As to quaternary structure, a double ring-shaped homohexamer of HslV is capped on each side by a ring-shaped HslU homohexamer. The assembly of the HslU/HslV complex is dependent on binding of ATP.

It localises to the cytoplasm. In terms of biological role, ATPase subunit of a proteasome-like degradation complex; this subunit has chaperone activity. The binding of ATP and its subsequent hydrolysis by HslU are essential for unfolding of protein substrates subsequently hydrolyzed by HslV. HslU recognizes the N-terminal part of its protein substrates and unfolds these before they are guided to HslV for hydrolysis. In Bacillus cereus (strain G9842), this protein is ATP-dependent protease ATPase subunit HslU.